The following is a 219-amino-acid chain: Orotidine 5'-phosphate decarboxylase (219 aa).

Substrate contacts are provided by residues Asp-10, Lys-32, Asp-58–Thr-67, Ser-113, Pro-163–Tyr-173, Gly-186, and Arg-187. Lys-60 acts as the Proton donor in catalysis.

It belongs to the OMP decarboxylase family. Type 1 subfamily. Homodimer.

It catalyses the reaction orotidine 5'-phosphate + H(+) = UMP + CO2. The protein operates within pyrimidine metabolism; UMP biosynthesis via de novo pathway; UMP from orotate: step 2/2. Functionally, catalyzes the decarboxylation of orotidine 5'-monophosphate (OMP) to uridine 5'-monophosphate (UMP). This chain is Orotidine 5'-phosphate decarboxylase, found in Thermoplasma volcanium (strain ATCC 51530 / DSM 4299 / JCM 9571 / NBRC 15438 / GSS1).